A 1364-amino-acid chain; its full sequence is Outer kinetochore KNL1 complex subunit spc7 (1364 aa).

Polar residues predominate over residues 1–15 (MPTSPRRNSIATTDN). 3 disordered regions span residues 1 to 36 (MPTS…GALQ), 124 to 190 (YPKD…DIAS), and 202 to 223 (EALN…LSIQ). Basic and acidic residues predominate over residues 124–136 (YPKDHQSDSEKST). Residues 157-169 (GPTTTSFSRNETQ) show a composition bias toward polar residues. A compositionally biased stretch (low complexity) spans 170–181 (SSPHSHSASIIS). Residues 254 to 257 (MDLT) carry the MELT; degenerate motif. At Thr-257 the chain carries Phosphothreonine; by mph1. The disordered stretch occupies residues 289–334 (ASHDPSNQTQLSSPNKSSSPTSIEISDFSKNNENHDQSENKEEEED). Over residues 300–310 (SSPNKSSSPTS) the composition is skewed to low complexity. Residues 318-328 (KNNENHDQSEN) are compositionally biased toward basic and acidic residues. The MELT; degenerate signature appears at 450–453 (MDLT). Thr-453 bears the Phosphothreonine; by mph1 mark. The interval 456–503 (ISSTNAPTHLNEDDLNQFTSNISSSSKPRKDNNKTANSSKPIPDSEDF) is disordered. Residues 471–481 (NQFTSNISSSS) are compositionally biased toward polar residues. An MELT; degenerate motif is present at residues 504-507 (MDIT). The residue at position 507 (Thr-507) is a Phosphothreonine; by mph1. 2 disordered regions span residues 564–643 (LPSA…SSFD) and 697–837 (GATP…GVSN). Residues 566–585 (SADKENAEREEIPSYSDKSE) are compositionally biased toward basic and acidic residues. Over residues 586–617 (NFNTTSFTNHERSPNGNNNLKFSKDPNSSSPS) the composition is skewed to polar residues. The segment covering 719–730 (EVSRQPTDDKGE) has biased composition (basic and acidic residues). A compositionally biased stretch (polar residues) spans 747 to 773 (LTIQQTNEIKHVPTNTTSSVKLPQQPS). Positions 791–802 (SLERLESQEPNR) are enriched in basic and acidic residues. A compositionally biased stretch (polar residues) spans 808–820 (VGSSNAGNTTSVG). Positions 1075-1155 (LAQAQEKLEK…EEQLLNLKNE (81 aa)) form a coiled coil. The Nuclear localization signal motif lies at 1091 to 1105 (RRRRLLSEKEERRKE).

As to quaternary structure, component of the KNL1/SPC105 complex composed of at least spc7 and sos7. Part of the outer kinetochore KMN network that includes the KNL1, MIS12 and NDC80 complexes. Interacts (via C-terminus) with sos7 (via C-terminus); the interaction is direct. Interacts (when phosphorylated on MELT motifs) with bub1 and bub3; to recruit the BUB1-BUB3 complex to the kinetochore. In terms of processing, phosphorylation of threonine residues in the MELT motifs by mph1/mps1 leads to recruitment of bub1 and bub3 to the kinetochore, and is required to maintain spindle assembly checkpoint signaling.

Its subcellular location is the nucleus. It is found in the chromosome. It localises to the centromere. The protein localises to the kinetochore. In terms of biological role, acts as a component of the outer kinetochore KNL1 complex that serves as a docking point for spindle assembly checkpoint components and mediates microtubule-kinetochore interactions. Kinetochores, consisting of a centromere-associated inner segment and a microtubule-contacting outer segment, play a crucial role in chromosome segregation by mediating the physical connection between centromeric DNA and spindle microtubules. The outer kinetochore is made up of the ten-subunit KMN network, comprising the MIS12, NDC80 and KNL1 complexes, and auxiliary microtubule-associated components; together they connect the outer kinetochore with the inner kinetochore, bind microtubules, and mediate interactions with mitotic checkpoint proteins that delay anaphase until chromosomes are bioriented on the spindle. Recruits the BUB1-BUB3 complex to kinetochores when phosphorylated by mph1/mps1, to support spindle assembly checkpoint signaling. Functions both in mitotic and in meiotic chromosome segregation. This chain is Outer kinetochore KNL1 complex subunit spc7, found in Schizosaccharomyces pombe (strain 972 / ATCC 24843) (Fission yeast).